The chain runs to 99 residues: Ferredoxin, heterocyst (99 aa).

Positions Y4–P96 constitute a 2Fe-2S ferredoxin-type domain. Residues C42, C47, C50, and C80 each coordinate [2Fe-2S] cluster.

The protein belongs to the 2Fe2S plant-type ferredoxin family. Requires [2Fe-2S] cluster as cofactor.

In terms of biological role, ferredoxins are iron-sulfur proteins that transfer electrons in a wide variety of metabolic reactions. The protein is Ferredoxin, heterocyst (fdxH) of Microchaete diplosiphon (Fremyella diplosiphon).